We begin with the raw amino-acid sequence, 212 residues long: 7-carboxy-7-deazaguanine synthase (212 aa).

Residues 22-24 and Arg37 contribute to the substrate site; that span reads LQG. The region spanning 28-212 is the Radical SAM core domain; the sequence is NTGMPAVFVR…VQTHKWAGIE (185 aa). [4Fe-4S] cluster-binding residues include Cys41, Cys45, and Cys48. Thr50 provides a ligand contact to Mg(2+). A substrate-binding site is contributed by Thr78. S-adenosyl-L-methionine contacts are provided by residues Gly80 and 122-124; that span reads SPK.

The protein belongs to the radical SAM superfamily. 7-carboxy-7-deazaguanine synthase family. As to quaternary structure, homodimer. The cofactor is [4Fe-4S] cluster. It depends on S-adenosyl-L-methionine as a cofactor. Mg(2+) is required as a cofactor.

The enzyme catalyses 6-carboxy-5,6,7,8-tetrahydropterin + H(+) = 7-carboxy-7-deazaguanine + NH4(+). It participates in purine metabolism; 7-cyano-7-deazaguanine biosynthesis. Its function is as follows. Catalyzes the complex heterocyclic radical-mediated conversion of 6-carboxy-5,6,7,8-tetrahydropterin (CPH4) to 7-carboxy-7-deazaguanine (CDG), a step common to the biosynthetic pathways of all 7-deazapurine-containing compounds. The protein is 7-carboxy-7-deazaguanine synthase of Neisseria meningitidis serogroup B (strain ATCC BAA-335 / MC58).